Reading from the N-terminus, the 271-residue chain is Regulatory protein RecX (271 aa).

Belongs to the RecX family.

Its subcellular location is the cytoplasm. In terms of biological role, modulates RecA activity. The chain is Regulatory protein RecX from Lactobacillus delbrueckii subsp. bulgaricus (strain ATCC 11842 / DSM 20081 / BCRC 10696 / JCM 1002 / NBRC 13953 / NCIMB 11778 / NCTC 12712 / WDCM 00102 / Lb 14).